Here is a 358-residue protein sequence, read N- to C-terminus: Probable D-xylulose reductase A (358 aa).

Zn(2+) is bound by residues Cys47, His72, and Glu73. 182–187 (GAGPVG) serves as a coordination point for NAD(+).

Belongs to the zinc-containing alcohol dehydrogenase family. Requires Zn(2+) as cofactor.

It catalyses the reaction xylitol + NAD(+) = D-xylulose + NADH + H(+). It functions in the pathway carbohydrate degradation; L-arabinose degradation via L-arabinitol; D-xylulose 5-phosphate from L-arabinose (fungal route): step 4/5. Its function is as follows. Xylitol dehydrogenase which catalyzes the conversion of xylitol to D-xylulose. Xylose is a major component of hemicelluloses such as xylan. Most fungi utilize D-xylose via three enzymatic reactions, xylose reductase (XR), xylitol dehydrogenase (XDH), and xylulokinase, to form xylulose 5-phosphate, which enters pentose phosphate pathway. This chain is Probable D-xylulose reductase A (xdhA), found in Aspergillus niger (strain ATCC MYA-4892 / CBS 513.88 / FGSC A1513).